Consider the following 185-residue polypeptide: Ribosome-recycling factor (185 aa).

Belongs to the RRF family.

The protein resides in the cytoplasm. Its function is as follows. Responsible for the release of ribosomes from messenger RNA at the termination of protein biosynthesis. May increase the efficiency of translation by recycling ribosomes from one round of translation to another. The chain is Ribosome-recycling factor from Streptococcus pyogenes serotype M1.